The primary structure comprises 486 residues: Beta-barrel assembly-enhancing protease (486 aa).

The signal sequence occupies residues 1–19; it reads MIATLLSSLLLTGPISAGA. Residue H134 coordinates Zn(2+). E135 is a catalytic residue. Positions 138 and 199 each coordinate Zn(2+). Catalysis depends on D203, which acts as the Proton donor.

It belongs to the peptidase M48 family. BepA subfamily. It depends on Zn(2+) as a cofactor.

It is found in the periplasm. Functionally, functions both as a chaperone and a metalloprotease. Maintains the integrity of the outer membrane by promoting either the assembly or the elimination of outer membrane proteins, depending on their folding state. This is Beta-barrel assembly-enhancing protease from Yersinia pestis.